A 612-amino-acid chain; its full sequence is Mineralocorticoid receptor (612 aa).

The segment at 1–228 is modulating; it reads GNEIADSTVS…STGPSRPSKV (228 aa). Cys229, Cys232, Cys246, Cys249, Cys269, Cys275, Cys285, and Cys288 together coordinate Zn(2+). 2 consecutive NR C4-type zinc fingers follow at residues 229 to 249 and 269 to 293; these read CLVC…CGSC and CAGR…LQKC. Residues 229-298 constitute a DNA-binding region (nuclear receptor); it reads CLVCGDEASG…RLQKCLQAGM (70 aa). Residues 299–349 form a hinge region; the sequence is NLGARKSKKLGKLKGVHEEHPQQPLQQTPTASPKEDTTLTSSSKEPSANSN. The segment at 310–348 is disordered; the sequence is KLKGVHEEHPQQPLQQTPTASPKEDTTLTSSSKEPSANS. Positions 339–348 are enriched in low complexity; the sequence is SSSKEPSANS. An NR LBD domain is found at 350–592; sequence SLVPLISAVS…EFPAMLVEII (243 aa). The 21-hydroxyprogesterone site is built by Asn398 and Gln404. 2 residues coordinate aldosterone: Asn398 and Gln404. 2 residues coordinate progesterone: Asn398 and Gln404. Positions 410-413 are important for coactivator binding; sequence KWAK. 21-hydroxyprogesterone is bound by residues Arg445 and Thr573. Arg445 and Thr573 together coordinate aldosterone. Residues Arg445 and Thr573 each contribute to the progesterone site.

It belongs to the nuclear hormone receptor family. NR3 subfamily.

The protein resides in the cytoplasm. It is found in the nucleus. Its function is as follows. Receptor for both mineralocorticoids (MC) such as aldosterone and glucocorticoids (GC) such as corticosterone or cortisol. Binds to mineralocorticoid response elements (MRE) and transactivates target genes. The effect of MC is to increase ion and water transport and thus raise extracellular fluid volume and blood pressure and lower potassium levels. The polypeptide is Mineralocorticoid receptor (nr3c2) (Xenopus laevis (African clawed frog)).